A 39-amino-acid polypeptide reads, in one-letter code: Photosystem II reaction center protein J (39 aa).

Residues 9 to 29 traverse the membrane as a helical segment; sequence LWLVATVGGIAVITVLGIFIY.

The protein belongs to the PsbJ family. In terms of assembly, PSII is composed of 1 copy each of membrane proteins PsbA, PsbB, PsbC, PsbD, PsbE, PsbF, PsbH, PsbI, PsbJ, PsbK, PsbL, PsbM, PsbT, PsbX, PsbY, PsbZ, Psb30/Ycf12, at least 3 peripheral proteins of the oxygen-evolving complex and a large number of cofactors. It forms dimeric complexes.

Its subcellular location is the plastid. The protein localises to the chloroplast thylakoid membrane. One of the components of the core complex of photosystem II (PSII). PSII is a light-driven water:plastoquinone oxidoreductase that uses light energy to abstract electrons from H(2)O, generating O(2) and a proton gradient subsequently used for ATP formation. It consists of a core antenna complex that captures photons, and an electron transfer chain that converts photonic excitation into a charge separation. The chain is Photosystem II reaction center protein J from Gracilaria tenuistipitata var. liui (Red alga).